A 475-amino-acid polypeptide reads, in one-letter code: Membrane-bound lytic murein transglycosylase F (475 aa).

The signal sequence occupies residues 1–30 (MKKLKINYLFIGILTLLLAAALWPSIPWFG). A non-LT domain region spans residues 31–269 (KTENHIAAIQ…RIEEKYLGHG (239 aa)). Residues 270–475 (DDFDYVDTRS…MKLAQDYPAV (206 aa)) form an LT domain region. Residue glutamate 314 is part of the active site.

The protein in the N-terminal section; belongs to the bacterial solute-binding protein 3 family. It in the C-terminal section; belongs to the transglycosylase Slt family.

It localises to the cell outer membrane. The catalysed reaction is Exolytic cleavage of the (1-&gt;4)-beta-glycosidic linkage between N-acetylmuramic acid (MurNAc) and N-acetylglucosamine (GlcNAc) residues in peptidoglycan, from either the reducing or the non-reducing ends of the peptidoglycan chains, with concomitant formation of a 1,6-anhydrobond in the MurNAc residue.. Functionally, murein-degrading enzyme that degrades murein glycan strands and insoluble, high-molecular weight murein sacculi, with the concomitant formation of a 1,6-anhydromuramoyl product. Lytic transglycosylases (LTs) play an integral role in the metabolism of the peptidoglycan (PG) sacculus. Their lytic action creates space within the PG sacculus to allow for its expansion as well as for the insertion of various structures such as secretion systems and flagella. The protein is Membrane-bound lytic murein transglycosylase F of Salmonella typhi.